A 905-amino-acid polypeptide reads, in one-letter code: FIGNL1-interacting regulator of recombination and mitosis (905 aa).

Residues S101 and S796 each carry the phosphoserine modification. K845 is modified (N6-acetyllysine).

Interacts (via its N-terminal region) with PLK1; controls PLK1 kinase activity. Interacts (via the KVVXF motif) with PPP1CC; controls PLK1 kinase activity. Interacts with FIGNL1; may regulate homologous recombination. Post-translationally, phosphorylation at Ser-101 by PLK1 strengthens FIRRM-PLK1 interaction. Phosphorylation at Ser-796 by PLK1 negatively regulates its interaction with PPP1CC.

Its subcellular location is the chromosome. It localises to the centromere. The protein localises to the kinetochore. It is found in the nucleus. The protein resides in the midbody. Its subcellular location is the cytoplasm. It localises to the cytoskeleton. The protein localises to the spindle. Its function is as follows. Regulates PLK1 kinase activity at kinetochores and promotes faithful chromosome segregation in prometaphase by bridging kinase and phosphatase activities. Phosphorylation of FIRRM by PLK1 negatively regulates its interaction with the phosphatase, PPP1CC, thus creating a negative feedback loop for maintaining proper PLK1 kinase activity during mitosis. In complex with FIGL1 may regulate homologous recombination. The polypeptide is FIGNL1-interacting regulator of recombination and mitosis (Rattus norvegicus (Rat)).